A 278-amino-acid polypeptide reads, in one-letter code: Probable endonuclease 4 (278 aa).

H70, H108, E143, D176, H179, H210, D223, H225, and E255 together coordinate Zn(2+).

The protein belongs to the AP endonuclease 2 family. Zn(2+) is required as a cofactor.

It carries out the reaction Endonucleolytic cleavage to 5'-phosphooligonucleotide end-products.. Its function is as follows. Endonuclease IV plays a role in DNA repair. It cleaves phosphodiester bonds at apurinic or apyrimidinic (AP) sites, generating a 3'-hydroxyl group and a 5'-terminal sugar phosphate. The sequence is that of Probable endonuclease 4 from Mycoplasmopsis agalactiae (strain NCTC 10123 / CIP 59.7 / PG2) (Mycoplasma agalactiae).